Reading from the N-terminus, the 258-residue chain is E3 ubiquitin-protein ligase RNF170 (258 aa).

The Lumenal portion of the chain corresponds to 1 to 24; sequence MAKYQGEVQSLKLDDDSVIEGVSD. The chain crosses the membrane as a helical span at residues 25–45; it reads QVLVAVVVSFALIATLVYALF. Over 46–201 the chain is Cytoplasmic; sequence RNVHQNIHPE…GGLFWMFRIR (156 aa). An RING-type zinc finger spans residues 87–130; the sequence is CPICLHQASFPVETNCGHLFCGACIIAYWRYGSWLGAISCPICR. A helical membrane pass occupies residues 202-222; the sequence is IILCLMGAFFYLISPLDFVPE. Ala-223 is a topological domain (lumenal). Residues 224-244 traverse the membrane as a helical segment; the sequence is LFGILGFLDDFFVIFLLLIYI. The Cytoplasmic segment spans residues 245 to 258; that stretch reads SIMYREVITQRLTR.

In terms of assembly, (Microbial infection) Interacts with human cytomegalovirus protein NEC2/UL50; this interaction promotes of UBA7 ubiquitination and subsequent proteasomal degradation. As to quaternary structure, constitutively associated with the ERLIN1/ERLIN 2 complex. Interacts with activated ITPR1. As to expression, expressed in the spinal cord.

The protein localises to the endoplasmic reticulum membrane. The enzyme catalyses S-ubiquitinyl-[E2 ubiquitin-conjugating enzyme]-L-cysteine + [acceptor protein]-L-lysine = [E2 ubiquitin-conjugating enzyme]-L-cysteine + N(6)-ubiquitinyl-[acceptor protein]-L-lysine.. Its pathway is protein modification; protein ubiquitination. E3 ubiquitin-protein ligase that plays an essential role in stimulus-induced inositol 1,4,5-trisphosphate receptor type 1 (ITPR1) ubiquitination and degradation via the endoplasmic reticulum-associated degradation (ERAD) pathway. Also involved in ITPR1 turnover in resting cells. Selectively inhibits the TLR3-triggered innate immune response by promoting the 'Lys-48'-linked polyubiquitination and degradation of TLR3. This Homo sapiens (Human) protein is E3 ubiquitin-protein ligase RNF170 (RNF170).